The following is a 248-amino-acid chain: 3-deoxy-manno-octulosonate cytidylyltransferase (248 aa).

It belongs to the KdsB family.

It localises to the cytoplasm. The catalysed reaction is 3-deoxy-alpha-D-manno-oct-2-ulosonate + CTP = CMP-3-deoxy-beta-D-manno-octulosonate + diphosphate. It participates in nucleotide-sugar biosynthesis; CMP-3-deoxy-D-manno-octulosonate biosynthesis; CMP-3-deoxy-D-manno-octulosonate from 3-deoxy-D-manno-octulosonate and CTP: step 1/1. The protein operates within bacterial outer membrane biogenesis; lipopolysaccharide biosynthesis. In terms of biological role, activates KDO (a required 8-carbon sugar) for incorporation into bacterial lipopolysaccharide in Gram-negative bacteria. This is 3-deoxy-manno-octulosonate cytidylyltransferase from Salmonella agona (strain SL483).